Here is a 767-residue protein sequence, read N- to C-terminus: Protein transport protein Sec23B (767 aa).

Ala-2 carries the post-translational modification N-acetylalanine. Zn(2+) contacts are provided by Cys-61, Cys-66, Cys-85, and Cys-88. Lys-564 is subject to N6-acetyllysine. The Gelsolin-like repeat unit spans residues 634–720 (PEPVLLDSSS…EHGGSQARFL (87 aa)).

Belongs to the SEC23/SEC24 family. SEC23 subfamily. As to quaternary structure, COPII is composed of at least five proteins: the Sec23/24 complex, the Sec13/31 complex and Sar1. Interacts with SAR1A.

It localises to the cytoplasmic vesicle. Its subcellular location is the COPII-coated vesicle membrane. The protein resides in the endoplasmic reticulum membrane. The protein localises to the cytoplasm. It is found in the cytosol. Its function is as follows. Component of the coat protein complex II (COPII) which promotes the formation of transport vesicles from the endoplasmic reticulum (ER). The coat has two main functions, the physical deformation of the endoplasmic reticulum membrane into vesicles and the selection of cargo molecules for their transport to the Golgi complex. The polypeptide is Protein transport protein Sec23B (Mus musculus (Mouse)).